The primary structure comprises 465 residues: ATP-dependent protease ATPase subunit HslU (465 aa).

Residues Val19 and 61 to 66 (GVGKTE) each bind ATP. Positions 153–175 (LFQSDGSDGDDETTEQDSHDEIR) are disordered. Positions 279, 343, and 415 each coordinate ATP.

Belongs to the ClpX chaperone family. HslU subfamily. In terms of assembly, a double ring-shaped homohexamer of HslV is capped on each side by a ring-shaped HslU homohexamer. The assembly of the HslU/HslV complex is dependent on binding of ATP.

It localises to the cytoplasm. Its function is as follows. ATPase subunit of a proteasome-like degradation complex; this subunit has chaperone activity. The binding of ATP and its subsequent hydrolysis by HslU are essential for unfolding of protein substrates subsequently hydrolyzed by HslV. HslU recognizes the N-terminal part of its protein substrates and unfolds these before they are guided to HslV for hydrolysis. This chain is ATP-dependent protease ATPase subunit HslU, found in Oceanobacillus iheyensis (strain DSM 14371 / CIP 107618 / JCM 11309 / KCTC 3954 / HTE831).